A 213-amino-acid polypeptide reads, in one-letter code: High frequency lysogenization protein HflD homolog (213 aa).

This sequence belongs to the HflD family.

The protein localises to the cytoplasm. It localises to the cell inner membrane. The sequence is that of High frequency lysogenization protein HflD homolog from Alcanivorax borkumensis (strain ATCC 700651 / DSM 11573 / NCIMB 13689 / SK2).